The chain runs to 448 residues: CCA-adding enzyme (448 aa).

S52 and K55 together coordinate ATP. CTP-binding residues include S52 and K55. Residues D64, D66, and D118 each contribute to the Mg(2+) site. Residues H141, K160, and Y169 each coordinate ATP. Residues H141, K160, and Y169 each contribute to the CTP site.

Belongs to the tRNA nucleotidyltransferase/poly(A) polymerase family. Archaeal CCA-adding enzyme subfamily. As to quaternary structure, homodimer. The cofactor is Mg(2+).

The catalysed reaction is a tRNA precursor + 2 CTP + ATP = a tRNA with a 3' CCA end + 3 diphosphate. It carries out the reaction a tRNA with a 3' CCA end + 2 CTP + ATP = a tRNA with a 3' CCACCA end + 3 diphosphate. Functionally, catalyzes the addition and repair of the essential 3'-terminal CCA sequence in tRNAs without using a nucleic acid template. Adds these three nucleotides in the order of C, C, and A to the tRNA nucleotide-73, using CTP and ATP as substrates and producing inorganic pyrophosphate. tRNA 3'-terminal CCA addition is required both for tRNA processing and repair. Also involved in tRNA surveillance by mediating tandem CCA addition to generate a CCACCA at the 3' terminus of unstable tRNAs. While stable tRNAs receive only 3'-terminal CCA, unstable tRNAs are marked with CCACCA and rapidly degraded. The chain is CCA-adding enzyme from Pyrococcus abyssi (strain GE5 / Orsay).